We begin with the raw amino-acid sequence, 20 residues long: Punein (20 aa).

Residues 1-20 (YHYYNPEENHFCATWDASKP) enclose the Barwin domain.

In terms of processing, the N-terminus is blocked.

This is Punein from Punica granatum (Pomegranate).